Consider the following 431-residue polypeptide: UDP-N-acetylmuramate--L-alanine ligase (431 aa).

Residue 108-114 (GAHGKST) participates in ATP binding.

The protein belongs to the MurCDEF family.

It localises to the cytoplasm. It catalyses the reaction UDP-N-acetyl-alpha-D-muramate + L-alanine + ATP = UDP-N-acetyl-alpha-D-muramoyl-L-alanine + ADP + phosphate + H(+). It functions in the pathway cell wall biogenesis; peptidoglycan biosynthesis. Cell wall formation. The chain is UDP-N-acetylmuramate--L-alanine ligase from Campylobacter jejuni subsp. jejuni serotype O:23/36 (strain 81-176).